A 522-amino-acid chain; its full sequence is tRNA-2-methylthio-N(6)-dimethylallyladenosine synthase (522 aa).

Residues 24-140 (RTYEVKTYGC…LPTLLQRAEH (117 aa)) enclose the MTTase N-terminal domain. Positions 33, 69, 103, 177, 181, and 184 each coordinate [4Fe-4S] cluster. Residues 163–399 (RESAYAGWVS…MVVQEQVCEE (237 aa)) enclose the Radical SAM core domain. Positions 402–473 (QKLIGTTVEL…PFFLIADSGV (72 aa)) constitute a TRAM domain.

Belongs to the methylthiotransferase family. MiaB subfamily. In terms of assembly, monomer. [4Fe-4S] cluster serves as cofactor.

Its subcellular location is the cytoplasm. It catalyses the reaction N(6)-dimethylallyladenosine(37) in tRNA + (sulfur carrier)-SH + AH2 + 2 S-adenosyl-L-methionine = 2-methylsulfanyl-N(6)-dimethylallyladenosine(37) in tRNA + (sulfur carrier)-H + 5'-deoxyadenosine + L-methionine + A + S-adenosyl-L-homocysteine + 2 H(+). In terms of biological role, catalyzes the methylthiolation of N6-(dimethylallyl)adenosine (i(6)A), leading to the formation of 2-methylthio-N6-(dimethylallyl)adenosine (ms(2)i(6)A) at position 37 in tRNAs that read codons beginning with uridine. The chain is tRNA-2-methylthio-N(6)-dimethylallyladenosine synthase from Corynebacterium glutamicum (strain ATCC 13032 / DSM 20300 / JCM 1318 / BCRC 11384 / CCUG 27702 / LMG 3730 / NBRC 12168 / NCIMB 10025 / NRRL B-2784 / 534).